A 139-amino-acid chain; its full sequence is Large ribosomal subunit protein uL14A (139 aa).

It belongs to the universal ribosomal protein uL14 family. Component of the large ribosomal subunit (LSU). Mature yeast ribosomes consist of a small (40S) and a large (60S) subunit. The 40S small subunit contains 1 molecule of ribosomal RNA (18S rRNA) and at least 33 different proteins. The large 60S subunit contains 3 rRNA molecules (25S, 5.8S and 5S rRNA) and at least 46 different proteins.

The protein localises to the cytoplasm. It localises to the nucleus. In terms of biological role, component of the ribosome, a large ribonucleoprotein complex responsible for the synthesis of proteins in the cell. The small ribosomal subunit (SSU) binds messenger RNAs (mRNAs) and translates the encoded message by selecting cognate aminoacyl-transfer RNA (tRNA) molecules. The large subunit (LSU) contains the ribosomal catalytic site termed the peptidyl transferase center (PTC), which catalyzes the formation of peptide bonds, thereby polymerizing the amino acids delivered by tRNAs into a polypeptide chain. The nascent polypeptides leave the ribosome through a tunnel in the LSU and interact with protein factors that function in enzymatic processing, targeting, and the membrane insertion of nascent chains at the exit of the ribosomal tunnel. The sequence is that of Large ribosomal subunit protein uL14A (rpl2301) from Schizosaccharomyces pombe (strain 972 / ATCC 24843) (Fission yeast).